The chain runs to 269 residues: tRNA pseudouridine synthase A (269 aa).

Residue D51 is the Nucleophile of the active site. Y109 lines the substrate pocket.

The protein belongs to the tRNA pseudouridine synthase TruA family. As to quaternary structure, homodimer.

It carries out the reaction uridine(38/39/40) in tRNA = pseudouridine(38/39/40) in tRNA. Its function is as follows. Formation of pseudouridine at positions 38, 39 and 40 in the anticodon stem and loop of transfer RNAs. The chain is tRNA pseudouridine synthase A from Haemophilus influenzae (strain PittGG).